The sequence spans 199 residues: N-(5'-phosphoribosyl)anthranilate isomerase (199 aa).

It belongs to the TrpF family.

The catalysed reaction is N-(5-phospho-beta-D-ribosyl)anthranilate = 1-(2-carboxyphenylamino)-1-deoxy-D-ribulose 5-phosphate. It functions in the pathway amino-acid biosynthesis; L-tryptophan biosynthesis; L-tryptophan from chorismate: step 3/5. The polypeptide is N-(5'-phosphoribosyl)anthranilate isomerase (trpF) (Lacticaseibacillus casei (Lactobacillus casei)).